Here is a 451-residue protein sequence, read N- to C-terminus: Phosphoglucosamine mutase (451 aa).

The active-site Phosphoserine intermediate is the Ser107. Mg(2+)-binding residues include Ser107, Asp246, Asp248, and Asp250. Ser107 carries the post-translational modification Phosphoserine.

Belongs to the phosphohexose mutase family. Mg(2+) serves as cofactor. In terms of processing, activated by phosphorylation.

The enzyme catalyses alpha-D-glucosamine 1-phosphate = D-glucosamine 6-phosphate. In terms of biological role, catalyzes the conversion of glucosamine-6-phosphate to glucosamine-1-phosphate. The chain is Phosphoglucosamine mutase from Azoarcus sp. (strain BH72).